The sequence spans 201 residues: Protocatechuate 3,4-dioxygenase alpha chain (201 aa).

Arg134 is a binding site for 3,4-dihydroxybenzoate.

This sequence belongs to the intradiol ring-cleavage dioxygenase family. The enzyme is an oligomer of 12 copies of the alpha and beta chains. The cofactor is Fe(3+).

The catalysed reaction is 3,4-dihydroxybenzoate + O2 = 3-carboxy-cis,cis-muconate + 2 H(+). It functions in the pathway aromatic compound metabolism; beta-ketoadipate pathway; 3-carboxy-cis,cis-muconate from 3,4-dihydroxybenzoate: step 1/1. Its function is as follows. Plays an essential role in the utilization of numerous aromatic and hydroaromatic compounds via the beta-ketoadipate pathway. The chain is Protocatechuate 3,4-dioxygenase alpha chain (pcaG) from Pseudomonas putida (Arthrobacter siderocapsulatus).